The primary structure comprises 227 residues: Cytochrome c oxidase subunit 2 (227 aa).

Topologically, residues 1–14 (MAYPFQLGLQDASS) are mitochondrial intermembrane. The helical transmembrane segment at 15 to 45 (PIMEELTNFHDHTLMIVFLISSLVLYIISSM) threads the bilayer. Residues 46-59 (LTTKMTHTSTMDAQ) are Mitochondrial matrix-facing. A helical transmembrane segment spans residues 60-87 (EVETIWTVLPAVILILIALPSLRILYMM). Topologically, residues 88–227 (DEINNPVLTV…HFENWSTSMI (140 aa)) are mitochondrial intermembrane. 6 residues coordinate Cu cation: histidine 161, cysteine 196, glutamate 198, cysteine 200, histidine 204, and methionine 207. Residue glutamate 198 participates in Mg(2+) binding.

Belongs to the cytochrome c oxidase subunit 2 family. Component of the cytochrome c oxidase (complex IV, CIV), a multisubunit enzyme composed of 14 subunits. The complex is composed of a catalytic core of 3 subunits MT-CO1, MT-CO2 and MT-CO3, encoded in the mitochondrial DNA, and 11 supernumerary subunits COX4I, COX5A, COX5B, COX6A, COX6B, COX6C, COX7A, COX7B, COX7C, COX8 and NDUFA4, which are encoded in the nuclear genome. The complex exists as a monomer or a dimer and forms supercomplexes (SCs) in the inner mitochondrial membrane with NADH-ubiquinone oxidoreductase (complex I, CI) and ubiquinol-cytochrome c oxidoreductase (cytochrome b-c1 complex, complex III, CIII), resulting in different assemblies (supercomplex SCI(1)III(2)IV(1) and megacomplex MCI(2)III(2)IV(2)). Found in a complex with TMEM177, COA6, COX18, COX20, SCO1 and SCO2. Interacts with TMEM177 in a COX20-dependent manner. Interacts with COX20. Interacts with COX16. Requires Cu cation as cofactor.

Its subcellular location is the mitochondrion inner membrane. The catalysed reaction is 4 Fe(II)-[cytochrome c] + O2 + 8 H(+)(in) = 4 Fe(III)-[cytochrome c] + 2 H2O + 4 H(+)(out). In terms of biological role, component of the cytochrome c oxidase, the last enzyme in the mitochondrial electron transport chain which drives oxidative phosphorylation. The respiratory chain contains 3 multisubunit complexes succinate dehydrogenase (complex II, CII), ubiquinol-cytochrome c oxidoreductase (cytochrome b-c1 complex, complex III, CIII) and cytochrome c oxidase (complex IV, CIV), that cooperate to transfer electrons derived from NADH and succinate to molecular oxygen, creating an electrochemical gradient over the inner membrane that drives transmembrane transport and the ATP synthase. Cytochrome c oxidase is the component of the respiratory chain that catalyzes the reduction of oxygen to water. Electrons originating from reduced cytochrome c in the intermembrane space (IMS) are transferred via the dinuclear copper A center (CU(A)) of subunit 2 and heme A of subunit 1 to the active site in subunit 1, a binuclear center (BNC) formed by heme A3 and copper B (CU(B)). The BNC reduces molecular oxygen to 2 water molecules using 4 electrons from cytochrome c in the IMS and 4 protons from the mitochondrial matrix. This chain is Cytochrome c oxidase subunit 2 (MT-CO2), found in Lophuromys flavopunctatus (Yellow-spotted brush-furred rat).